The following is a 142-amino-acid chain: Cytochrome c-type biogenesis protein CcmE (142 aa).

At 1–2 (MK) the chain is on the cytoplasmic side. The helical; Signal-anchor for type II membrane protein transmembrane segment at 3–23 (GKYLLGILVILGALGYMVFGG) threads the bilayer. The Periplasmic segment spans residues 24–142 (LGRNLVYFLT…EVRKLIEEAQ (119 aa)). Heme contacts are provided by His118 and Tyr122.

This sequence belongs to the CcmE/CycJ family.

The protein localises to the cell inner membrane. Heme chaperone required for the biogenesis of c-type cytochromes. Transiently binds heme delivered by CcmC and transfers the heme to apo-cytochromes in a process facilitated by CcmF and CcmH. The protein is Cytochrome c-type biogenesis protein CcmE of Thermus thermophilus (strain ATCC 27634 / DSM 579 / HB8).